Here is a 145-residue protein sequence, read N- to C-terminus: Putative pre-16S rRNA nuclease (145 aa).

It belongs to the YqgF nuclease family.

Its subcellular location is the cytoplasm. Its function is as follows. Could be a nuclease involved in processing of the 5'-end of pre-16S rRNA. The sequence is that of Putative pre-16S rRNA nuclease from Sulfurihydrogenibium sp. (strain YO3AOP1).